Consider the following 358-residue polypeptide: MEPLHARYPFLARSREAVEAAAVDLGEIVATDETVTARALERVESAITDGTVGEPHRRTRVELLSYPVARVLVSLVDVHICTRKYAQAEAEAAYDRFTEEFATTTELKSTQRETLDRTELLGEFDLASAVSDAGDGYRVEVGAYLDLAADQRGDSWRLVNRPLTDGEVRVTAEELNVLLKQAIRHRVTDGLPFTVPDAIADELTAEVEQLEEVLSELELTREIDTVVPELFPPCMKSLLDQVQKGEHLEHHSRFAIATFLVGIGMTTDEIVDLFQVNPGFGEEATRYQVDHIRGDTSPTEYSTPACSTMQSYGDCVNMDDLCEAISHPMGYYEQKLDDTDEEELVDWREDEGEEEADA.

Cys234, Cys306, Cys315, and Cys322 together coordinate [4Fe-4S] cluster. The tract at residues 335-358 is disordered; it reads KLDDTDEEELVDWREDEGEEEADA. A compositionally biased stretch (acidic residues) spans 338 to 358; the sequence is DTDEEELVDWREDEGEEEADA.

It belongs to the eukaryotic-type primase large subunit family. In terms of assembly, heterodimer of a small subunit (PriS) and a large subunit (PriL). Requires [4Fe-4S] cluster as cofactor.

Functionally, regulatory subunit of DNA primase, an RNA polymerase that catalyzes the synthesis of short RNA molecules used as primers for DNA polymerase during DNA replication. Stabilizes and modulates the activity of the small subunit, increasing the rate of DNA synthesis, and conferring RNA synthesis capability. The DNA polymerase activity may enable DNA primase to also catalyze primer extension after primer synthesis. May also play a role in DNA repair. This chain is DNA primase large subunit PriL, found in Haloarcula marismortui (strain ATCC 43049 / DSM 3752 / JCM 8966 / VKM B-1809) (Halobacterium marismortui).